A 315-amino-acid polypeptide reads, in one-letter code: Probable mannose-6-phosphate isomerase GmuF (315 aa).

Positions 95, 97, 115, and 172 each coordinate Zn(2+). Residue arginine 192 is part of the active site.

This sequence belongs to the mannose-6-phosphate isomerase type 1 family. Zn(2+) is required as a cofactor.

It carries out the reaction D-mannose 6-phosphate = D-fructose 6-phosphate. Seems to be involved in the degradation of glucomannan. The protein is Probable mannose-6-phosphate isomerase GmuF (gmuF) of Bacillus subtilis (strain 168).